A 461-amino-acid polypeptide reads, in one-letter code: ATP synthase subunit beta 2 (461 aa).

Position 151-158 (151-158 (GGAGVGKT)) interacts with ATP.

This sequence belongs to the ATPase alpha/beta chains family. F-type ATPases have 2 components, CF(1) - the catalytic core - and CF(0) - the membrane proton channel. CF(1) has five subunits: alpha(3), beta(3), gamma(1), delta(1), epsilon(1). CF(0) has three main subunits: a(1), b(2) and c(9-12). The alpha and beta chains form an alternating ring which encloses part of the gamma chain. CF(1) is attached to CF(0) by a central stalk formed by the gamma and epsilon chains, while a peripheral stalk is formed by the delta and b chains.

Its subcellular location is the cell inner membrane. The catalysed reaction is ATP + H2O + 4 H(+)(in) = ADP + phosphate + 5 H(+)(out). Its function is as follows. Produces ATP from ADP in the presence of a proton gradient across the membrane. The catalytic sites are hosted primarily by the beta subunits. This is ATP synthase subunit beta 2 from Pseudoalteromonas atlantica (strain T6c / ATCC BAA-1087).